The chain runs to 227 residues: Superoxide dismutase [Cu-Zn] (227 aa).

Positions 1-19 (MPKLLPPVVLAGCVVALGA) are cleaved as a signal peptide. The N-palmitoyl cysteine moiety is linked to residue Cys-20. Cys-20 is lipidated: S-diacylglycerol cysteine. The tract at residues 23–55 (PQHASSLPGTTPAVWTGSPSPSGAGAAEAAPAA) is disordered. Over residues 39–55 (GSPSPSGAGAAEAAPAA) the composition is skewed to low complexity. His-103 and His-105 together coordinate Cu cation. A disulfide bridge links Cys-110 with Cys-221. Position 145 (Asp-145) interacts with Zn(2+). Position 182 (His-182) interacts with Cu cation.

The protein belongs to the Cu-Zn superoxide dismutase family. Cu cation serves as cofactor. The cofactor is Zn(2+).

The protein resides in the cell membrane. It carries out the reaction 2 superoxide + 2 H(+) = H2O2 + O2. In terms of biological role, destroys radicals which are normally produced within the cells and which are toxic to biological systems. May play a role in favoring mycobacterial survival in phagocytes. The polypeptide is Superoxide dismutase [Cu-Zn] (sodC) (Mycolicibacterium paratuberculosis (strain ATCC BAA-968 / K-10) (Mycobacterium paratuberculosis)).